Here is a 160-residue protein sequence, read N- to C-terminus: Ureidoglycolate lyase (160 aa).

This sequence belongs to the ureidoglycolate lyase family. Homodimer. Ni(2+) is required as a cofactor.

The catalysed reaction is (S)-ureidoglycolate = urea + glyoxylate. Its pathway is nitrogen metabolism; (S)-allantoin degradation. In terms of biological role, catalyzes the catabolism of the allantoin degradation intermediate (S)-ureidoglycolate, generating urea and glyoxylate. Involved in the anaerobic utilization of allantoin as sole nitrogen source. Reinforces the induction of genes involved in the degradation of allantoin and glyoxylate by producing glyoxylate. This Escherichia coli O127:H6 (strain E2348/69 / EPEC) protein is Ureidoglycolate lyase.